A 395-amino-acid chain; its full sequence is Acetate kinase 1 (395 aa).

Residue N8 coordinates Mg(2+). K15 is an ATP binding site. R89 serves as a coordination point for substrate. The Proton donor/acceptor role is filled by D146. Residues 206-210, 283-285, and 330-334 each bind ATP; these read HIGNG, DMR, and GIGEN. E382 is a Mg(2+) binding site.

It belongs to the acetokinase family. As to quaternary structure, homodimer. The cofactor is Mg(2+). Mn(2+) serves as cofactor.

The protein localises to the cytoplasm. The enzyme catalyses acetate + ATP = acetyl phosphate + ADP. Its pathway is metabolic intermediate biosynthesis; acetyl-CoA biosynthesis; acetyl-CoA from acetate: step 1/2. In terms of biological role, catalyzes the formation of acetyl phosphate from acetate and ATP. Can also catalyze the reverse reaction. The sequence is that of Acetate kinase 1 from Lactococcus lactis subsp. lactis (strain IL1403) (Streptococcus lactis).